The primary structure comprises 124 residues: MKRLETIRHMWSVVYDHFDIVNGKECCYVHTHSSNQNPIPSTVKTNLYMKTMGSCIQMDSMEALEYLSELKESGGWSPRPEMQEFEYPDGVEDTESIERLVEEFFNRSELQAGKLVKFGNSINC.

It belongs to the Schlafen family. Subgroup poxviridae B3 subfamily.

The polypeptide is Schlafen-like protein (Homo sapiens (Human)).